The primary structure comprises 150 residues: Protein ORF35 (150 aa).

The sequence is that of Protein ORF35 (ORF35) from Homo sapiens (Human).